A 400-amino-acid polypeptide reads, in one-letter code: Probable RNA polymerase sigma factor RfaY (400 aa).

The Polymerase core binding signature appears at 62–75; that stretch reads WQRLAQLHQPASFL. A DNA-binding region (H-T-H motif) is located at residues 165-184; sequence SDAAVRKRLSRARATVRNEL.

Belongs to the sigma-70 factor family. ECF subfamily.

Functionally, sigma factors are initiation factors that promote the attachment of RNA polymerase to specific initiation sites and are then released. This sigma factor is involved in lipopolysaccharide biosynthesis and pathogenicity. This chain is Probable RNA polymerase sigma factor RfaY (rfaY), found in Xanthomonas campestris pv. campestris (strain ATCC 33913 / DSM 3586 / NCPPB 528 / LMG 568 / P 25).